The sequence spans 504 residues: Sensor protein FixL (504 aa).

Residues 1 to 21 are disordered; sequence MTDTPTQALPPKAPQAGPTVP. Topologically, residues 1 to 50 are cytoplasmic; sequence MTDTPTQALPPKAPQAGPTVPGTVRRAVPGSAAAALVIAASHFAALSAFD. Residues 51–71 traverse the membrane as a helical segment; it reads PRILLVLLVIVVLASSGGLFA. At 72-99 the chain is on the periplasmic side; it reads GLAATAVSALGLALRGLLSGDTVVADWQ. The helical transmembrane segment at 100–118 threads the bilayer; sequence SLGLLTIAGAGIAVLGERL. Residues 119–504 are Cytoplasmic-facing; sequence RRTRLDAVAR…TVDEEAMNDA (386 aa). The PAS domain occupies 135–202; that stretch reads REAHLSSILD…QHDLYLSRYL (68 aa). One can recognise a PAC domain in the interval 203 to 262; it reads TTGERRIIGIGRVVTGERKDGATFPMELAVGEMHSVSGRFFTGFIRDLTERQNTEARLQE. The 216-residue stretch at 282–497 folds into the Histidine kinase domain; the sequence is TLAHELNQPL…IFRFTLRTVD (216 aa). The residue at position 285 (His285) is a Phosphohistidine; by autocatalysis.

Heme is required as a cofactor.

It localises to the cell inner membrane. It carries out the reaction ATP + protein L-histidine = ADP + protein N-phospho-L-histidine.. With respect to regulation, the heme moiety regulates the kinase activity. Functionally, putative oxygen sensor; modulates the activity of FixJ, a transcriptional activator of nitrogen fixation fixK gene. FixL probably acts as a kinase that phosphorylates FixJ. The sequence is that of Sensor protein FixL (fixL) from Azorhizobium caulinodans (strain ATCC 43989 / DSM 5975 / JCM 20966 / LMG 6465 / NBRC 14845 / NCIMB 13405 / ORS 571).